The chain runs to 1524 residues: DNA polymerase alpha catalytic subunit (1524 aa).

2 disordered regions span residues 1 to 53 and 68 to 139; these read MSGD…QKPI and RRRE…KVNP. Basic and acidic residues predominate over residues 20–30; sequence SSRKDTLERLK. Residues 79-96 are compositionally biased toward acidic residues; sequence EDGEGGDLGYLDEGEEED. 8 residues coordinate Zn(2+): cysteine 1333, cysteine 1336, cysteine 1375, cysteine 1378, cysteine 1414, cysteine 1419, cysteine 1440, and cysteine 1446. The CysA-type zinc-finger motif lies at 1333–1378; that stretch reads CPSCSTAFNCPSIISSVCASISKKPATPETEESDSTFWLKLHCPKC. The CysB motif motif lies at 1414–1446; that stretch reads CEDESCKHTTRSPNFRLLGERERGTVCPNYPNC.

Belongs to the DNA polymerase type-B family.

Its subcellular location is the nucleus. The enzyme catalyses DNA(n) + a 2'-deoxyribonucleoside 5'-triphosphate = DNA(n+1) + diphosphate. Polymerase alpha in a complex with DNA primase is a replicative polymerase. This is DNA polymerase alpha catalytic subunit (POLA) from Arabidopsis thaliana (Mouse-ear cress).